Reading from the N-terminus, the 472-residue chain is Relaxin-3 receptor 1 (472 aa).

Residues 1 to 81 are Extracellular-facing; the sequence is MQVASATPAA…ESTDTEARVR (81 aa). N36 and N40 each carry an N-linked (GlcNAc...) asparagine glycan. Residues 82–102 traverse the membrane as a helical segment; that stretch reads ILISAVYWVVCALGLAGNLLV. At 103–119 the chain is on the cytoplasmic side; it reads LYLMKSKQGWRKSSINL. Residues 120–140 form a helical membrane-spanning segment; that stretch reads FVTNLALTDFQFVLTLPFWAV. The Extracellular segment spans residues 141–156; it reads ENALDFKWPFGKAMCK. A disulfide bond links C155 and C247. A helical transmembrane segment spans residues 157 to 177; sequence IVSMVTSMNMYASVFFLTAMS. Topologically, residues 178–215 are cytoplasmic; it reads VARYHSVASALKSHRTRGRGRGDCCGQSLRESCCFSAK. Residues 216–236 form a helical membrane-spanning segment; the sequence is VLCGLIWASAALASLPNAIFS. At 237 to 270 the chain is on the extracellular side; the sequence is TTIRVLGEELCLMHFPDKLLGWDRQFWLGLYHLQ. Residues 271–291 form a helical membrane-spanning segment; that stretch reads KVLLGFLLPLSIISLCYLLLV. Topologically, residues 292-298 are cytoplasmic; sequence RFISDRR. Residues 299-319 traverse the membrane as a helical segment; sequence VVGTTDAVGAAAAPGGGLSTA. The Extracellular segment spans residues 320-332; sequence SARRRSKVTKSVT. A helical membrane pass occupies residues 333-353; sequence IVVLSFFLCWLPNQALTTWSI. At 354–472 the chain is on the cytoplasmic side; sequence LIKFNAVPFS…YDLLPSSSAY (119 aa).

It belongs to the G-protein coupled receptor 1 family.

It is found in the cell membrane. In terms of biological role, receptor for RNL3/relaxin-3. Binding of the ligand inhibit cAMP accumulation. The chain is Relaxin-3 receptor 1 (Rxfp3) from Mus musculus (Mouse).